We begin with the raw amino-acid sequence, 175 residues long: Protein-export protein SecB (175 aa).

Positions 153 to 163 are enriched in polar residues; that stretch reads QQQPDAANGND. The disordered stretch occupies residues 153 to 175; the sequence is QQQPDAANGNDSGIILPPGATRQ.

Belongs to the SecB family. Homotetramer, a dimer of dimers. One homotetramer interacts with 1 SecA dimer.

The protein resides in the cytoplasm. In terms of biological role, one of the proteins required for the normal export of preproteins out of the cell cytoplasm. It is a molecular chaperone that binds to a subset of precursor proteins, maintaining them in a translocation-competent state. It also specifically binds to its receptor SecA. This Bordetella bronchiseptica (strain ATCC BAA-588 / NCTC 13252 / RB50) (Alcaligenes bronchisepticus) protein is Protein-export protein SecB.